Reading from the N-terminus, the 251-residue chain is 3-isopropylmalate dehydratase small subunit 1 (251 aa).

Residues 1 to 59 (MAASLQSANPTLSRTLASPNKPSSFATFRSPFLRFNSTSVASNFKPLVSREASSSFVTR) constitute a chloroplast transit peptide.

This sequence belongs to the LeuD family. Heterodimer of the large LEUC/IIL1 subunit and the small LEUD (SSU1, SSU2 or SSU3) subunits. In terms of tissue distribution, expressed at low levels in roots, root tips, at the basis of the hypocotyls, and in emerging leaves. In young seedlings, expressed in cotyledon epidermal cells. In hypocotyls, expressed in peripheral cells. In seedling roots, expressed in the epidermis, including root hairs, and throughout the cortex. In rosette leaves, expressed in the upper and lower epidermis. In roots of adult plants, expressed in the root tips and cortex of the mature root enclosing the stele. In flowering stalks, expressed in the epidermis. Expressed in the carpel epidermis.

Its subcellular location is the plastid. The protein resides in the chloroplast stroma. The enzyme catalyses (2R,3S)-3-isopropylmalate = (2S)-2-isopropylmalate. It functions in the pathway amino-acid biosynthesis; L-leucine biosynthesis; L-leucine from 3-methyl-2-oxobutanoate: step 2/4. Functionally, catalyzes the isomerization between 2-isopropylmalate and 3-isopropylmalate, via the formation of 2-isopropylmaleate. Plays an essential role in leucine biosynthesis. Functions in both the biosynthesis of leucine, and in the methionine chain elongation pathway of aliphatic glucosinolate formation. Plays an essential role in female gametophyte development. The protein is 3-isopropylmalate dehydratase small subunit 1 of Arabidopsis thaliana (Mouse-ear cress).